The sequence spans 740 residues: D-ornithine 4,5-aminomutase subunit beta (740 aa).

Substrate-binding positions include E81, Y160, H182, and 294–296 (RAQ). The region spanning 602–739 (PLKIVAATVG…VKKRREMREG (138 aa)) is the B12-binding domain. Residues 614–616 (EHS) and H615 each bind adenosylcob(III)alamin. K626 carries the N6-(pyridoxal phosphate)lysine modification. Residues 664–669 (STIISH), T700, and S720 each bind adenosylcob(III)alamin.

Heterotetramer of 2 alpha (OraS) and 2 beta (OraE) subunits. The cofactor is adenosylcob(III)alamin. Requires pyridoxal 5'-phosphate as cofactor.

It catalyses the reaction D-ornithine = (2R,4S)-2,4-diaminopentanoate. With respect to regulation, increased activity in the presence of dithiothreitol (DTT) in vitro. Inhibited by 1 mM potassium phosphate and potassium chloride. Inhibited by L-alpha-ornithine, D,L-alpha-lysine, L-beta-lysine (50%-60%), L-alpha-lysine (26%) and by delta-amino-n-valeric acid to a lesser extent. Significant decrease in activity is observed in the presence of 0.2 mM p-chloromercuribenzoate, N-ethylmaleimide and also by 2 mM iodoacetate to a lesser extent but not inhibited by arsenite. Component of a complex that catalyzes the reversible migration of the omega amino group of D-ornithine to C-4 to form (2R,4S)-2,4-diaminopentanoic acid. OraE may be the catalytic subunit. Active only on D-ornithine and 2,4-diaminopentanoic acid but not active on L-ornithine, L-beta-lysine, L-alpha-lysine or D-alpha-lysine. The protein is D-ornithine 4,5-aminomutase subunit beta (oraE) of Acetoanaerobium sticklandii (strain ATCC 12662 / DSM 519 / JCM 1433 / CCUG 9281 / NCIMB 10654 / HF) (Clostridium sticklandii).